Reading from the N-terminus, the 83-residue chain is Small ribosomal subunit protein bS20 (83 aa).

The segment at 1–21 (MPNIKSAIKRVRTTETAEERN) is disordered. Positions 12 to 21 (RTTETAEERN) are enriched in basic and acidic residues.

It belongs to the bacterial ribosomal protein bS20 family.

Binds directly to 16S ribosomal RNA. This chain is Small ribosomal subunit protein bS20, found in Staphylococcus epidermidis (strain ATCC 35984 / DSM 28319 / BCRC 17069 / CCUG 31568 / BM 3577 / RP62A).